The following is a 193-amino-acid chain: Protein PrsJ (193 aa).

A signal peptide spans 1–27 (MVVNKTTAVLYLIALSLSGFIHTFLRA).

The protein resides in the periplasm. This protein maintains pilus integrity and thus is an important participant in pilus assembly. It may function as molecular chaperone directly or indirectly in the correct assembly of PapA subunits. The polypeptide is Protein PrsJ (prsJ) (Escherichia coli).